Consider the following 948-residue polypeptide: UvrABC system protein A (948 aa).

33 to 40 (GLSGSGKS) provides a ligand contact to ATP. The segment at 252–279 (CPICGFSIGELEPRMFSFNSPFGACPTC) adopts a C4-type zinc-finger fold. 2 consecutive ABC transporter domains span residues 309-587 (WIPT…KKSL) and 607-935 (ASDR…KYLK). 639-646 (GVSGSGKS) provides a ligand contact to ATP. The C4-type zinc-finger motif lies at 738–764 (CEACKGDGIIKIEMHFLPDVYVPCEVC).

Belongs to the ABC transporter superfamily. UvrA family. In terms of assembly, forms a heterotetramer with UvrB during the search for lesions.

It is found in the cytoplasm. Functionally, the UvrABC repair system catalyzes the recognition and processing of DNA lesions. UvrA is an ATPase and a DNA-binding protein. A damage recognition complex composed of 2 UvrA and 2 UvrB subunits scans DNA for abnormalities. When the presence of a lesion has been verified by UvrB, the UvrA molecules dissociate. This is UvrABC system protein A from Staphylococcus aureus (strain MRSA252).